Here is a 265-residue protein sequence, read N- to C-terminus: Probable cyclic nucleotide phosphodiesterase SynWH7803_1390 (265 aa).

The Fe cation site is built by Asp9, His11, Asp49, Asn86, His157, His196, and His198. Residues His11, Asp49, and 86-87 (NH) each bind AMP. His198 lines the AMP pocket.

Belongs to the cyclic nucleotide phosphodiesterase class-III family. Requires Fe(2+) as cofactor.

This chain is Probable cyclic nucleotide phosphodiesterase SynWH7803_1390, found in Synechococcus sp. (strain WH7803).